The following is a 99-amino-acid chain: Malonate decarboxylase acyl carrier protein (99 aa).

At Ser-25 the chain carries O-(phosphoribosyl dephospho-coenzyme A)serine.

Belongs to the MdcC family. In terms of processing, covalently binds the prosthetic group of malonate decarboxylase.

The protein resides in the cytoplasm. Its function is as follows. Subunit of malonate decarboxylase, it is an acyl carrier protein to which acetyl and malonyl thioester residues are bound via a 2'-(5''-phosphoribosyl)-3'-dephospho-CoA prosthetic group and turn over during the catalytic mechanism. This Pseudomonas fluorescens (strain SBW25) protein is Malonate decarboxylase acyl carrier protein.